Here is a 242-residue protein sequence, read N- to C-terminus: MLLGVNIDHIATVRNARGTTYPSPVEAALVAETHGADLITMHLREDRRHIKDADVFAVKNAIRTRLNLEMALTEEMLENALKVMPEDVCIVPEKRQEITTEGGLDVLAQQEKIAGFTKILTDAGIRVSLFIDADDRQIQAARDVGAPVVELHTGAYADARSHAEQIRQFERIQNGAHFAGDLGLVVNAGHGLTIHNVTPIAQILAIRELNIGHSLIAQALFLGLPEAVRQMKEAMFRARLLP.

Asparagine 6 contributes to the 3-amino-2-oxopropyl phosphate binding site. 8–9 (DH) is a 1-deoxy-D-xylulose 5-phosphate binding site. 3-amino-2-oxopropyl phosphate is bound at residue arginine 17. The active-site Proton acceptor is histidine 42. Residues arginine 44 and histidine 49 each coordinate 1-deoxy-D-xylulose 5-phosphate. The active-site Proton acceptor is glutamate 69. Threonine 99 contacts 1-deoxy-D-xylulose 5-phosphate. Catalysis depends on histidine 190, which acts as the Proton donor. 3-amino-2-oxopropyl phosphate is bound by residues glycine 191 and 212–213 (GH).

It belongs to the PNP synthase family. In terms of assembly, homooctamer; tetramer of dimers.

The protein resides in the cytoplasm. The catalysed reaction is 3-amino-2-oxopropyl phosphate + 1-deoxy-D-xylulose 5-phosphate = pyridoxine 5'-phosphate + phosphate + 2 H2O + H(+). Its pathway is cofactor biosynthesis; pyridoxine 5'-phosphate biosynthesis; pyridoxine 5'-phosphate from D-erythrose 4-phosphate: step 5/5. In terms of biological role, catalyzes the complicated ring closure reaction between the two acyclic compounds 1-deoxy-D-xylulose-5-phosphate (DXP) and 3-amino-2-oxopropyl phosphate (1-amino-acetone-3-phosphate or AAP) to form pyridoxine 5'-phosphate (PNP) and inorganic phosphate. This Neisseria meningitidis serogroup B (strain ATCC BAA-335 / MC58) protein is Pyridoxine 5'-phosphate synthase.